The chain runs to 312 residues: Ribosomal protein L11 methyltransferase (312 aa).

T163, G184, D206, and N248 together coordinate S-adenosyl-L-methionine.

Belongs to the methyltransferase superfamily. PrmA family.

It is found in the cytoplasm. The enzyme catalyses L-lysyl-[protein] + 3 S-adenosyl-L-methionine = N(6),N(6),N(6)-trimethyl-L-lysyl-[protein] + 3 S-adenosyl-L-homocysteine + 3 H(+). In terms of biological role, methylates ribosomal protein L11. This Clostridium kluyveri (strain NBRC 12016) protein is Ribosomal protein L11 methyltransferase.